Here is a 402-residue protein sequence, read N- to C-terminus: MTVTLCSPTEDDWPGMFLLAAASFTDFIGPESATAWRTLVPTDGAVVVRDGAGPGSEVVGMALYMDLRLAVPGEVVLPTAGLSFVAVAPTHRRRGLLRAMCAELHRRIADSGYPVAALHASEGGIYGRFGYGPATTLHELTVDRRFARFHADAPGGGLGGSSVRLVRPTEHRGEFEAIYERWRQQVPGGLLRPQVLWDELLAECKAAPGGDRESFALLHPDGYALYRVDRTDLKLARVSELRAVTADAHCALWRALIGLDSMERISIITHPQDPLPHLLTDTRLARTTWRQDGLWLRIMNVPAALEARGYAHEVGEFSTVLEVSDGGRFALKIGDGRARCTPTDAAAEIEMDRDVLGSLYLGAHRASTLAAANRLRTKDSQLLRRLDAAFASDVPVQTAFEF.

The region spanning 3 to 154 (VTLCSPTEDD…RFARFHADAP (152 aa)) is the N-acetyltransferase domain. Residues 85 to 87 (VAV), 93 to 98 (RRGLLR), and 121 to 122 (SE) each bind acetyl-CoA. Y126 acts as the Proton donor in catalysis. F402 serves as the catalytic Proton acceptor; via carboxylate.

It belongs to the acetyltransferase Eis family. In terms of assembly, homohexamer; trimer of dimers.

The protein resides in the secreted. It is found in the host cytoplasmic vesicle. The protein localises to the host phagosome. It localises to the extracellular vesicle. Its subcellular location is the bacterial extracellular vesicle. The protein resides in the host extracellular space. It carries out the reaction L-lysyl-[protein] + acetyl-CoA = N(6)-acetyl-L-lysyl-[protein] + CoA + H(+). Its function is as follows. Effector that is released into the host cell and affects host immune responses. Acts as an acetyltransferase that acetylates lysine residues of host proteins. This chain is N-acetyltransferase Eis, found in Mycobacterium bovis (strain ATCC BAA-935 / AF2122/97).